The primary structure comprises 299 residues: N-acetylmuramic acid 6-phosphate etherase (299 aa).

Residues 54–217 (TIAQYKKGGR…STITMVGVGK (164 aa)) form the SIS domain. Glu-82 functions as the Proton donor in the catalytic mechanism. Residue Glu-113 is part of the active site.

This sequence belongs to the GCKR-like family. MurNAc-6-P etherase subfamily. In terms of assembly, homodimer.

It catalyses the reaction N-acetyl-D-muramate 6-phosphate + H2O = N-acetyl-D-glucosamine 6-phosphate + (R)-lactate. It participates in amino-sugar metabolism; N-acetylmuramate degradation. Its function is as follows. Specifically catalyzes the cleavage of the D-lactyl ether substituent of MurNAc 6-phosphate, producing GlcNAc 6-phosphate and D-lactate. This Staphylococcus aureus (strain USA300) protein is N-acetylmuramic acid 6-phosphate etherase.